The chain runs to 94 residues: Aspartyl/glutamyl-tRNA(Asn/Gln) amidotransferase subunit C (94 aa).

It belongs to the GatC family. In terms of assembly, heterotrimer of A, B and C subunits.

The catalysed reaction is L-glutamyl-tRNA(Gln) + L-glutamine + ATP + H2O = L-glutaminyl-tRNA(Gln) + L-glutamate + ADP + phosphate + H(+). It catalyses the reaction L-aspartyl-tRNA(Asn) + L-glutamine + ATP + H2O = L-asparaginyl-tRNA(Asn) + L-glutamate + ADP + phosphate + 2 H(+). In terms of biological role, allows the formation of correctly charged Asn-tRNA(Asn) or Gln-tRNA(Gln) through the transamidation of misacylated Asp-tRNA(Asn) or Glu-tRNA(Gln) in organisms which lack either or both of asparaginyl-tRNA or glutaminyl-tRNA synthetases. The reaction takes place in the presence of glutamine and ATP through an activated phospho-Asp-tRNA(Asn) or phospho-Glu-tRNA(Gln). This Carboxydothermus hydrogenoformans (strain ATCC BAA-161 / DSM 6008 / Z-2901) protein is Aspartyl/glutamyl-tRNA(Asn/Gln) amidotransferase subunit C.